The primary structure comprises 160 residues: SsrA-binding protein (160 aa).

Belongs to the SmpB family.

It localises to the cytoplasm. Functionally, required for rescue of stalled ribosomes mediated by trans-translation. Binds to transfer-messenger RNA (tmRNA), required for stable association of tmRNA with ribosomes. tmRNA and SmpB together mimic tRNA shape, replacing the anticodon stem-loop with SmpB. tmRNA is encoded by the ssrA gene; the 2 termini fold to resemble tRNA(Ala) and it encodes a 'tag peptide', a short internal open reading frame. During trans-translation Ala-aminoacylated tmRNA acts like a tRNA, entering the A-site of stalled ribosomes, displacing the stalled mRNA. The ribosome then switches to translate the ORF on the tmRNA; the nascent peptide is terminated with the 'tag peptide' encoded by the tmRNA and targeted for degradation. The ribosome is freed to recommence translation, which seems to be the essential function of trans-translation. The protein is SsrA-binding protein of Mannheimia succiniciproducens (strain KCTC 0769BP / MBEL55E).